Consider the following 225-residue polypeptide: Gene 30 protein (225 aa).

A disordered region spans residues 48 to 73; the sequence is RNSELGHPEVKKEETTQQPEKGEGMA. Over residues 51-73 the composition is skewed to basic and acidic residues; it reads ELGHPEVKKEETTQQPEKGEGMA.

Its function is as follows. Essential for DNA synthesis. This Bacillus phage SP01 (Bacteriophage SP01) protein is Gene 30 protein (30).